Reading from the N-terminus, the 301-residue chain is MAANYWVSTQRRHWLFTRERLADIREGFKERDKVAHSQFPLPDQRLLNIYFSQQLIKLGKRTTTRQQALATAQVYIKRFYTKNDIRHTNPYLVITTAFYLACKMEECPQHIRFVVAEARSFWPEFIAPDVSKLGECEFALISEMNSQLIVHHPYRTLSELTPELQLTSDEVALAWSVINDHYLTDLPLLYPPHVIAVMAIIVAVVFKPSQTSFHGSAGPALAGAMRDGGVNLLAALGDKNGNGPPRIQKLVGWLAESEVDIKAVIECTQELVSLYEIWEQYSEKHCKELLGRMVKSKNLDK.

The region spanning 53–142 (QQLIKLGKRT…LGECEFALIS (90 aa)) is the Cyclin N-terminal domain.

This sequence belongs to the cyclin family. Cyclin C subfamily. Component of the srb8-11 complex, a regulatory module of the Mediator complex.

The protein localises to the nucleus. In terms of biological role, component of the srb8-11 complex. The srb8-11 complex is a regulatory module of the Mediator complex which is itself involved in regulation of basal and activated RNA polymerase II-dependent transcription. The srb8-11 complex may be involved in the transcriptional repression of a subset of genes regulated by Mediator. It may inhibit the association of the Mediator complex with RNA polymerase II to form the holoenzyme complex. The srb8-11 complex phosphorylates the C-terminal domain (CTD) of the largest subunit of RNA polymerase II. The protein is RNA polymerase II holoenzyme cyclin-like subunit (ssn8) of Aspergillus terreus (strain NIH 2624 / FGSC A1156).